The sequence spans 378 residues: Acyl-coenzyme A diphosphatase NUDT19 (378 aa).

In terms of domain architecture, Nudix hydrolase spans 7-258; it reads HWREAASVLL…EIWLAPPQFY (252 aa). The Nudix box motif lies at 105 to 126; the sequence is SPLPGEVAFRICAIRETFEEAG. Mg(2+) contacts are provided by E120 and E124. A Microbody targeting signal motif is present at residues 376 to 378; the sequence is SRL.

This sequence belongs to the Nudix hydrolase family. As to quaternary structure, monomer. Requires Mg(2+) as cofactor. It depends on Mn(2+) as a cofactor.

It is found in the peroxisome. The enzyme catalyses an acyl-CoA + H2O = an acyl-4'-phosphopantetheine + adenosine 3',5'-bisphosphate + 2 H(+). The catalysed reaction is CoA + H2O = (R)-4'-phosphopantetheine + adenosine 3',5'-bisphosphate + 2 H(+). It carries out the reaction hexanoyl-CoA + H2O = hexanoyl-4'-phosphopantetheine + adenosine 3',5'-bisphosphate + 2 H(+). It catalyses the reaction octanoyl-CoA + H2O = S-octanoyl-4'-phosphopantetheine + adenosine 3',5'-bisphosphate + 2 H(+). The enzyme catalyses butanoyl-CoA + H2O = S-butanoyl-4'-phosphopantetheine + adenosine 3',5'-bisphosphate + 2 H(+). The catalysed reaction is propanoyl-CoA + H2O = propanoyl-4'-phosphopantetheine + adenosine 3',5'-bisphosphate + 2 H(+). It carries out the reaction malonyl-CoA + H2O = malonyl-4'-phosphopantetheine + adenosine 3',5'-bisphosphate + 2 H(+). It catalyses the reaction succinyl-CoA + H2O = succinyl-4'-phosphopantetheine + adenosine 3',5'-bisphosphate + 2 H(+). The enzyme catalyses choloyl-CoA + H2O = S-choloyl-4'-phosphopantetheine + adenosine 3',5'-bisphosphate + 2 H(+). The catalysed reaction is 4,8-dimethylnonanoyl-CoA + H2O = S-(4,8-dimethylnonanoyl)-4'-phosphopantetheine + adenosine 3',5'-bisphosphate + 2 H(+). It carries out the reaction (9Z,12Z,15Z)-octadecatrienoyl-CoA + H2O = S-(9Z,12Z,15Z-octadecatrienoyl)-4'-phosphopantetheine + adenosine 3',5'-bisphosphate + 2 H(+). It catalyses the reaction (9Z,12Z)-octadecadienoyl-CoA + H2O = S-(9Z,12Z-octadecadienoyl)-4'-phosphopantetheine + adenosine 3',5'-bisphosphate + 2 H(+). The enzyme catalyses (9Z)-hexadecenoyl-CoA + H2O = S-(9Z-hexadecenoyl)-4'-phosphopantetheine + adenosine 3',5'-bisphosphate + 2 H(+). The catalysed reaction is (9Z)-tetradecenoyl-CoA + H2O = S-(9Z-tetradecenoyl)-4'-phosphopantetheine + adenosine 3',5'-bisphosphate + 2 H(+). It carries out the reaction (6Z)-octenoyl-CoA + H2O = S-(6Z-octenoyl)-4'-phosphopantetheine + adenosine 3',5'-bisphosphate + 2 H(+). It catalyses the reaction hexadecanoyl-CoA + H2O = S-hexadecanoyl-4'-phosphopantetheine + adenosine 3',5'-bisphosphate + 2 H(+). The enzyme catalyses tetradecanoyl-CoA + H2O = tetradecanoyl-4'-phosphopantetheine + adenosine 3',5'-bisphosphate + 2 H(+). The catalysed reaction is dodecanoyl-CoA + H2O = S-dodecanoyl-4'-phosphopantetheine + adenosine 3',5'-bisphosphate + 2 H(+). It carries out the reaction a 5'-end CoA-ribonucleoside in mRNA + H2O = a 5'-end phospho-adenosine-phospho-ribonucleoside in mRNA + (R)-4'-phosphopantetheine + 2 H(+). In terms of biological role, fatty acyl-coenzyme A (CoA) diphosphatase that hydrolyzes fatty acyl-CoA to yield acyl-4'-phosphopantetheine and adenosine 3',5'-bisphosphate. Mediates the hydrolysis of a wide range of CoA esters, including choloyl-CoA and branched-chain fatty-acyl-CoA esters and at low substrate concentrations medium and long-chain fatty-acyl-CoA esters are the primary substrates. Highest activity seen with medium-chain acyl-CoA esters and higher rates of activity seen with the unsaturated acyl-CoA esters compared with the saturated esters. Exhibits decapping activity towards dpCoA-capped RNAs in vitro. The polypeptide is Acyl-coenzyme A diphosphatase NUDT19 (NUDT19) (Gallus gallus (Chicken)).